The primary structure comprises 324 residues: UDP-N-acetylenolpyruvoylglucosamine reductase (324 aa).

An FAD-binding PCMH-type domain is found at phenylalanine 36–glutamate 203. Arginine 183 is an active-site residue. Serine 232 acts as the Proton donor in catalysis. The active site involves glutamate 302.

The protein belongs to the MurB family. The cofactor is FAD.

It is found in the cytoplasm. It catalyses the reaction UDP-N-acetyl-alpha-D-muramate + NADP(+) = UDP-N-acetyl-3-O-(1-carboxyvinyl)-alpha-D-glucosamine + NADPH + H(+). The protein operates within cell wall biogenesis; peptidoglycan biosynthesis. In terms of biological role, cell wall formation. The polypeptide is UDP-N-acetylenolpyruvoylglucosamine reductase (Rhizobium johnstonii (strain DSM 114642 / LMG 32736 / 3841) (Rhizobium leguminosarum bv. viciae)).